We begin with the raw amino-acid sequence, 320 residues long: Uroplakin-3b (320 aa).

An N-terminal signal peptide occupies residues 1–29 (MGLPWGQPHLGLQMLLLALNCLRPSLSLG). The Lumenal portion of the chain corresponds to 30-240 (EWGSWMDASS…LHPLFSGRPP (211 aa)). Asparagine 133 is a glycosylation site (N-linked (GlcNAc...) asparagine). The helical transmembrane segment at 241-266 (TLGLLGSLYHALLQPVVAGGGPGAAA) threads the bilayer. The Cytoplasmic segment spans residues 267–320 (DRLLHGQALHDPPHPTQRGRHTAGGLQAWPGPPPQPQPLAWPLCMGLGEMGRWE). The segment at 273–303 (QALHDPPHPTQRGRHTAGGLQAWPGPPPQPQ) is disordered.

The protein belongs to the uroplakin-3 family. In terms of assembly, heterodimer with uroplakin-1B (UPK1B).

The protein localises to the cell membrane. Component of the asymmetric unit membrane (AUM); a highly specialized biomembrane elaborated by terminally differentiated urothelial cells. May play an important role in AUM-cytoskeleton interaction in terminally differentiated urothelial cells. It also contributes to the formation of urothelial glycocalyx which may play an important role in preventing bacterial adherence. In Homo sapiens (Human), this protein is Uroplakin-3b (UPK3B).